The sequence spans 1404 residues: DNA-directed RNA polymerase subunit beta' (1404 aa).

Cysteine 60, cysteine 62, cysteine 75, and cysteine 78 together coordinate Zn(2+). Mg(2+) contacts are provided by aspartate 449, aspartate 451, and aspartate 453. 4 residues coordinate Zn(2+): cysteine 778, cysteine 852, cysteine 859, and cysteine 862. A disordered region spans residues 1381–1404; the sequence is DRPLEEEEEEEIPQSIADDSDGDE. Positions 1384–1404 are enriched in acidic residues; sequence LEEEEEEEIPQSIADDSDGDE.

It belongs to the RNA polymerase beta' chain family. The RNAP catalytic core consists of 2 alpha, 1 beta, 1 beta' and 1 omega subunit. When a sigma factor is associated with the core the holoenzyme is formed, which can initiate transcription. Requires Mg(2+) as cofactor. Zn(2+) serves as cofactor.

The enzyme catalyses RNA(n) + a ribonucleoside 5'-triphosphate = RNA(n+1) + diphosphate. In terms of biological role, DNA-dependent RNA polymerase catalyzes the transcription of DNA into RNA using the four ribonucleoside triphosphates as substrates. This chain is DNA-directed RNA polymerase subunit beta', found in Leptospira borgpetersenii serovar Hardjo-bovis (strain JB197).